The sequence spans 589 residues: Arginine--tRNA ligase (589 aa).

Positions P132–H142 match the 'HIGH' region motif.

This sequence belongs to the class-I aminoacyl-tRNA synthetase family. In terms of assembly, monomer.

Its subcellular location is the cytoplasm. The catalysed reaction is tRNA(Arg) + L-arginine + ATP = L-arginyl-tRNA(Arg) + AMP + diphosphate. The sequence is that of Arginine--tRNA ligase from Treponema pallidum subsp. pallidum (strain SS14).